Reading from the N-terminus, the 126-residue chain is Chemocyanin (126 aa).

Residues 1-30 (MAQGSGSAERALVLGVVLVFLVFNCEVAES) form the signal peptide. The 96-residue stretch at 31–126 (VVYTVGDGGG…GGLKIAVTAA (96 aa)) folds into the Phytocyanin domain. The Cu cation site is built by H69, C109, and H114. An intrachain disulfide couples C82 to C115.

Strongly expressed in stigma and style and to a lesser extent in leaves, ovary and petals. Not detected in pollen tubes, mature anthers or roots.

Diffusible chemotropic factor that induces pollen tube chemotropism. The sequence is that of Chemocyanin from Lilium longiflorum (Trumpet lily).